Reading from the N-terminus, the 605-residue chain is UvrABC system protein C (605 aa).

The GIY-YIG domain occupies Thr-13–Val-92. The UVR domain maps to Ser-205 to Ala-240.

This sequence belongs to the UvrC family. Interacts with UvrB in an incision complex.

The protein localises to the cytoplasm. Functionally, the UvrABC repair system catalyzes the recognition and processing of DNA lesions. UvrC both incises the 5' and 3' sides of the lesion. The N-terminal half is responsible for the 3' incision and the C-terminal half is responsible for the 5' incision. In Chlamydia caviae (strain ATCC VR-813 / DSM 19441 / 03DC25 / GPIC) (Chlamydophila caviae), this protein is UvrABC system protein C.